Reading from the N-terminus, the 587-residue chain is MPYHRGGDASSQADKLSGIVEESDLYEGFAPHVETSEIKTLDFYNLPKQTGKEPALRSYTEIQQLLQQGKKRDVKNILRENSWPINSPIRAQLWPMLCGQHQTKQQMLDGFYWEMVHQVFGTTELSEKPIMLPAFVDATHCLPYHLTSTGRAVADRIVNVLGYDCPDITYSPVLYPITSILLHFMSEEEAYICLAGLVGSKEKVFINQTKLQHEVTWKTVMQIAKKHTKSATSYFQRICPGLKLERIFMDWCWWILAGLPFQHLVRIMDCYFHEGIKVLYRVALVILNLFHKECQSNNEWSPDNIKNDIGNALIKFCKKIPVSPAKLLHAAFSIRGLSTQYISRIFIKTEMLLKSRSVLTSGSKQLIKSRSSDNLPTSQSQVNIQMMSHTLTIREHFGLPGTKNFIKTWTDRQFLFTLWSWLPVRITMYQPVLLYTTEEHGCSLTTFYVRVEQHEPTLLMIKTCNNEVFGAYCSSRWFERNVKDDKGQRQAYFGTGETFLFSLYPERAKYPWVGIEGDKDLGHSSELFMAADSKMITIGGGEGQAIWMDENIRFGKTDSCKTFNNPPLCPSGDFEIRVLEVYGFVGI.

A 1,2-diacyl-sn-glycero-3-phospho-(1D-myo-inositol)-binding residues include Lys-75 and Arg-79. In terms of domain architecture, Rab-GAP TBC spans 84 to 275; the sequence is PINSPIRAQL…RIMDCYFHEG (192 aa). A 1,2-diacyl-sn-glycero-3-phospho-(1D-myo-inositol)-binding positions include Lys-277, Arg-281, and 335–339; that span reads RGLST. Residues 408–585 enclose the TLDc domain; that stretch reads TWTDRQFLFT…IRVLEVYGFV (178 aa).

Detected in the larval ventral nerve cord and neuromuscular junction boutons (at protein level).

It is found in the cytoplasmic vesicle. Its subcellular location is the secretory vesicle. The protein localises to the synaptic vesicle membrane. The protein resides in the endosome membrane. Its function is as follows. GTPase-activating protein (GAP) for Rab35 which regulates synaptic vesicle (SV) protein recycling and turnover at the neuromuscular junction boutons and possibly ventral nerve cord via endosomal trafficking. Inhibits Rab35-mediated endosomal sorting which traffics old or dysfunctional SV proteins through a degradative endolysosomal route that involves the ESCRT pathway and the HOPS complex members dor, vps39 and rab7. This function is essential for preventing excessive degradation and turnover of vesicles from the readily releasable pool which leads to increased neurotransmission and eventually neurodegeneration. Preferentially binds phosphoinositides phosphorylated at the D5 position of the inositol ring, such as phosphatidylinositol 4,5-bisphosphate (PIP2) and phosphatidylinositol 3,4,5-trisphosphate (PIP3). Binding to phosphoinositides and thus membrane-association, is required for its function in regulating the turnover of synaptic-vesicle proteins. It is therefore likely that it is recruited to vesicle membranes with high phosphoinositide content and thereby selectively prevents endolysosomal degradation of these vesicles. The chain is GTPase-activating protein skywalker from Drosophila melanogaster (Fruit fly).